A 73-amino-acid polypeptide reads, in one-letter code: UPF0346 protein Lreu_0775 (73 aa).

Belongs to the UPF0346 family.

In Limosilactobacillus reuteri (strain DSM 20016) (Lactobacillus reuteri), this protein is UPF0346 protein Lreu_0775.